Reading from the N-terminus, the 342-residue chain is N-acetyl-gamma-glutamyl-phosphate reductase (342 aa).

Cys149 is an active-site residue.

Belongs to the NAGSA dehydrogenase family. Type 1 subfamily.

Its subcellular location is the cytoplasm. The catalysed reaction is N-acetyl-L-glutamate 5-semialdehyde + phosphate + NADP(+) = N-acetyl-L-glutamyl 5-phosphate + NADPH + H(+). It functions in the pathway amino-acid biosynthesis; L-arginine biosynthesis; N(2)-acetyl-L-ornithine from L-glutamate: step 3/4. Catalyzes the NADPH-dependent reduction of N-acetyl-5-glutamyl phosphate to yield N-acetyl-L-glutamate 5-semialdehyde. In Cereibacter sphaeroides (strain KD131 / KCTC 12085) (Rhodobacter sphaeroides), this protein is N-acetyl-gamma-glutamyl-phosphate reductase.